The following is a 178-amino-acid chain: ATP synthase subunit delta (178 aa).

The protein belongs to the ATPase delta chain family. F-type ATPases have 2 components, F(1) - the catalytic core - and F(0) - the membrane proton channel. F(1) has five subunits: alpha(3), beta(3), gamma(1), delta(1), epsilon(1). F(0) has three main subunits: a(1), b(2) and c(10-14). The alpha and beta chains form an alternating ring which encloses part of the gamma chain. F(1) is attached to F(0) by a central stalk formed by the gamma and epsilon chains, while a peripheral stalk is formed by the delta and b chains.

The protein resides in the cell membrane. Functionally, f(1)F(0) ATP synthase produces ATP from ADP in the presence of a proton or sodium gradient. F-type ATPases consist of two structural domains, F(1) containing the extramembraneous catalytic core and F(0) containing the membrane proton channel, linked together by a central stalk and a peripheral stalk. During catalysis, ATP synthesis in the catalytic domain of F(1) is coupled via a rotary mechanism of the central stalk subunits to proton translocation. In terms of biological role, this protein is part of the stalk that links CF(0) to CF(1). It either transmits conformational changes from CF(0) to CF(1) or is implicated in proton conduction. In Buchnera aphidicola subsp. Baizongia pistaciae (strain Bp), this protein is ATP synthase subunit delta.